Reading from the N-terminus, the 724-residue chain is Ribosomal RNA large subunit methyltransferase K/L (724 aa).

The THUMP domain maps to 42-153 (DAQRLVLWSR…KGRATLSVDL (112 aa)).

The protein belongs to the methyltransferase superfamily. RlmKL family.

It localises to the cytoplasm. It carries out the reaction guanosine(2445) in 23S rRNA + S-adenosyl-L-methionine = N(2)-methylguanosine(2445) in 23S rRNA + S-adenosyl-L-homocysteine + H(+). The enzyme catalyses guanosine(2069) in 23S rRNA + S-adenosyl-L-methionine = N(2)-methylguanosine(2069) in 23S rRNA + S-adenosyl-L-homocysteine + H(+). Specifically methylates the guanine in position 2445 (m2G2445) and the guanine in position 2069 (m7G2069) of 23S rRNA. The protein is Ribosomal RNA large subunit methyltransferase K/L of Xylella fastidiosa (strain 9a5c).